Consider the following 270-residue polypeptide: Palmitoyltransferase ZDHHC12-A (270 aa).

Residues 1–8 (MNKSLFKS) are Cytoplasmic-facing. A helical membrane pass occupies residues 9 to 29 (GCLVRTAHVILTWIITLILFL). Residues 30 to 45 (HNTDLRRCQERGDLLQ) are Lumenal-facing. A helical transmembrane segment spans residues 46–66 (PLVFSSVLLLSVLLYFTVSLM). Over 67–145 (DPGFVLSDSQ…DNCVGELNHR (79 aa)) the chain is Cytoplasmic. Positions 102-152 (RRCGYCFLLQPMRARHCKWCKRCVRRFDHHCPWIDNCVGELNHRWFLLYLC) constitute a DHHC domain. Residue Cys-132 is the S-palmitoyl cysteine intermediate of the active site. The helical transmembrane segment at 146–166 (WFLLYLCVQFTAVCWGLQSAW) threads the bilayer. Residues 167–182 (SGFISAPSWQQWFTQN) are Lumenal-facing. Residues 183–203 (VFLLVAFAVTAVFSVVLLLLL) traverse the membrane as a helical segment. The Cytoplasmic portion of the chain corresponds to 204 to 270 (CIHAYLASVN…MYIRHNNASV (67 aa)).

It belongs to the DHHC palmitoyltransferase family.

The protein localises to the golgi apparatus membrane. The protein resides in the endoplasmic reticulum membrane. It carries out the reaction L-cysteinyl-[protein] + hexadecanoyl-CoA = S-hexadecanoyl-L-cysteinyl-[protein] + CoA. Palmitoyltransferase that catalyzes the addition of palmitate onto various protein substrates. Has a palmitoyltransferase activity toward gephyrin/GPHN, regulating its clustering at synapses and its function in gamma-aminobutyric acid receptor clustering. Acts as an inhibitor of the NLRP3 inflammasome by mediating palmitoylation of NLRP3, thereby promoting NLRP3 degradation by the chaperone-mediated autophagy (CMA) process. In Danio rerio (Zebrafish), this protein is Palmitoyltransferase ZDHHC12-A.